A 1653-amino-acid chain; its full sequence is Clathrin heavy chain (1653 aa).

The tract at residues 1 to 483 (MSDLPIEFTE…FDTTLALACY (483 aa)) is globular terminal domain. WD40-like repeat stretches follow at residues 23 to 66 (FLDF…KNMG), 67 to 107 (GDSA…LDEP), 108 to 152 (VIFW…ANLN), 153 to 198 (NTQI…QAID), 199 to 263 (GHVA…PDAT), 264 to 307 (NDFP…ITAE), and 308 to 336 (SVFTAAPYNHENGIACINKKGQVLAVEIS). The tract at residues 453 to 469 (EKWLKEDKLECSEELGD) is binding site for the uncoating ATPase, involved in lattice disassembly. The tract at residues 484 to 527 (LRAGAHAKVISCLAELQQFEKIIPYCQKVGYQPNFLVLISSLIR) is flexible linker. The segment at 528 to 1653 (SSPDRASEFA…SAMNVQPTGF (1126 aa)) is heavy chain arm. CHCR repeat units lie at residues 543 to 689 (NPET…QTVV), 692 to 834 (ATKF…DEAF), 839 to 978 (LQSV…QLID), 985 to 1130 (IPEL…IPDA), 1134 to 1275 (YIKA…FKLA), 1280 to 1426 (LNLI…SLLV), and 1429 to 1572 (LTSL…REGF). Lys1107 participates in a covalent cross-link: Glycyl lysine isopeptide (Lys-Gly) (interchain with G-Cter in ubiquitin). The interval 1219–1528 (AARLCYSAVS…LLYRRNKKWA (310 aa)) is involved in binding clathrin light chain.

Belongs to the clathrin heavy chain family. As to quaternary structure, clathrin triskelions, composed of 3 heavy chains and 3 light chains, are the basic subunits of the clathrin coat. Interacts with the auxilin-like clathrin uncoating factor SWA2. Interacts with INP53.

Its subcellular location is the cytoplasmic vesicle membrane. The protein localises to the membrane. The protein resides in the coated pit. In terms of biological role, clathrin is the major protein of the polyhedral coat of coated pits and vesicles. In yeast, it is involved in the retention of proteins in an intracellular membrane compartment, presumably the trans-Golgi. This Saccharomyces cerevisiae (strain ATCC 204508 / S288c) (Baker's yeast) protein is Clathrin heavy chain (CHC1).